Reading from the N-terminus, the 216-residue chain is Adenylate kinase (216 aa).

10-15 (GAGKGT) is a binding site for ATP. The NMP stretch occupies residues 30 to 59 (STGDMLRAAVGVGTEVGKRAKAVMDAGKLV). AMP is bound by residues threonine 31, arginine 36, 57 to 59 (KLV), 85 to 88 (GFPR), and glutamine 92. The tract at residues 126–163 (GRYTCAQCGTVYHDTDKVPVEEGVCDKCGSTHFKRRPD) is LID. Arginine 127 is a binding site for ATP. Residues cysteine 130 and cysteine 133 each coordinate Zn(2+). ATP is bound at residue 136-137 (VY). Residues cysteine 150 and cysteine 153 each contribute to the Zn(2+) site. AMP-binding residues include arginine 160 and arginine 172. Residue alanine 200 participates in ATP binding.

Belongs to the adenylate kinase family. Monomer.

It localises to the cytoplasm. It catalyses the reaction AMP + ATP = 2 ADP. It functions in the pathway purine metabolism; AMP biosynthesis via salvage pathway; AMP from ADP: step 1/1. In terms of biological role, catalyzes the reversible transfer of the terminal phosphate group between ATP and AMP. Plays an important role in cellular energy homeostasis and in adenine nucleotide metabolism. This chain is Adenylate kinase, found in Rhizobium etli (strain CIAT 652).